Consider the following 430-residue polypeptide: tRNA(Ile)-lysidine synthase (430 aa).

27–32 is an ATP binding site; that stretch reads SGGSDS.

The protein belongs to the tRNA(Ile)-lysidine synthase family.

It localises to the cytoplasm. The enzyme catalyses cytidine(34) in tRNA(Ile2) + L-lysine + ATP = lysidine(34) in tRNA(Ile2) + AMP + diphosphate + H(+). Functionally, ligates lysine onto the cytidine present at position 34 of the AUA codon-specific tRNA(Ile) that contains the anticodon CAU, in an ATP-dependent manner. Cytidine is converted to lysidine, thus changing the amino acid specificity of the tRNA from methionine to isoleucine. The chain is tRNA(Ile)-lysidine synthase from Rickettsia bellii (strain RML369-C).